A 431-amino-acid chain; its full sequence is O-methyltransferase gliM (431 aa).

The stretch at 20–85 (EFKAIVNDLR…SMDKLQLQLV (66 aa)) forms a coiled coil. S-adenosyl-L-methionine is bound by residues D287 and 319-321 (GDF). The active-site Proton acceptor is H338.

This sequence belongs to the class I-like SAM-binding methyltransferase superfamily. Cation-independent O-methyltransferase family. COMT subfamily.

The protein operates within mycotoxin biosynthesis. In terms of biological role, O-methyltransferase; part of the gene cluster that mediates the biosynthesis of gliotoxin, a member of the epipolythiodioxopiperazine (ETP) class of toxins characterized by a disulfide bridged cyclic dipeptide. The first step in gliotoxin biosynthesis is the condensation of serine and phenylalanine to form the cyclo-L-phenylalanyl-L-serine diketopiperazine (DKP) by the NRPS gliP. GliP is also able to produce the DKP cyclo-L-tryptophanyl-L-serine, suggesting that the substrate specificity of the first adenylation (A) domain in gliP is sufficiently relaxed to accommodate both L-Phe and L-Trp. The cytochrome P450 monooxygenase gliC has been shown to catalyze the subsequent hydroxylation of the alpha-carbon of L-Phe in cyclo-L-phenylalanyl-L-serine whereas the second cytochrome P450 enzyme, gliF, is presumably involved in the modification of the DKP side chain. The glutathione S-transferase (GST) gliG then forms a bis-glutathionylated biosynthetic intermediate which is responsible for the sulfurization of gliotoxin. This bis-glutathionylated intermediate is subsequently processed by the gamma-glutamyl cyclotransferase gliK to remove both gamma-glutamyl moieties. Subsequent processing via gliI yields a biosynthetic intermediate, which is N-methylated via the N-methyltransferase gliN, before the gliotoxin oxidoreductase gliT-mediated disulfide bridge closure. GliN-mediated amide methylation confers stability to ETP, damping the spontaneous formation of tri- and tetrasulfides. Intracellular dithiol gliotoxin oxidized by gliT is subsequently effluxed by gliA. Gliotoxin contributes to pathogenesis during invasive aspergillosis. In macrophages and neutrophils, gliotoxin showed inhibition of various different cell functions including cytokine production, antigen presentation, phagocytosis, and production of reactive oxygen species. This is O-methyltransferase gliM from Aspergillus fumigatus (strain ATCC MYA-4609 / CBS 101355 / FGSC A1100 / Af293) (Neosartorya fumigata).